A 70-amino-acid polypeptide reads, in one-letter code: Conotoxin Im23.3 (70 aa).

The first 22 residues, 1 to 22 (MIMRMTLTLFVLVVMTAASASG), serve as a signal peptide directing secretion. Positions 23–28 (DALTEA) are excised as a propeptide. Disulfide bonds link cysteine 34–cysteine 41, cysteine 45–cysteine 53, and cysteine 54–cysteine 69.

Belongs to the conotoxin K superfamily. As to expression, expressed by the venom duct.

It localises to the secreted. Its function is as follows. Neurotoxin that induces excitatory symptoms in mice following intracranial administration. No symptoms are observed after intraperitoneal and intravenous (tail vein) injections. The protein is Conotoxin Im23.3 of Conus imperialis (Imperial cone).